The chain runs to 307 residues: Protease HtpX homolog (307 aa).

The next 2 helical transmembrane spans lie at 10–30 and 40–60; these read VITILAGIGIALLFSLIAYGL and ISIIYFLLIFVLFIDIIQWLV. His144 lines the Zn(2+) pocket. Glu145 is an active-site residue. Residue His148 participates in Zn(2+) binding. A run of 2 helical transmembrane segments spans residues 156–176 and 187–207; these read LLLAIGLIPTLIFYLGYSMIF and FFLVAIILFILSSVFNIMILG. Glu213 lines the Zn(2+) pocket.

This sequence belongs to the peptidase M48B family. Zn(2+) is required as a cofactor.

The protein resides in the cell membrane. The chain is Protease HtpX homolog from Picrophilus torridus (strain ATCC 700027 / DSM 9790 / JCM 10055 / NBRC 100828 / KAW 2/3).